Consider the following 758-residue polypeptide: Probable serine/threonine-protein kinase HAL5-like (758 aa).

Disordered stretches follow at residues 1–170 and 189–252; these read MGTV…SADD and IDNA…HRGR. The span at 22 to 57 shows a compositional bias: polar residues; the sequence is RSISGSIKSLFKPSSVQNSTPTVSPHESSPPLGNSD. Basic and acidic residues predominate over residues 58–69; sequence NLKKLVDTKRAE. A compositionally biased stretch (low complexity) spans 129–153; it reads SSPRQSSSTNDRSSITSATSSVTSA. Over residues 216 to 226 the composition is skewed to basic and acidic residues; it reads DKNFESSEYEI. Over residues 227–247 the composition is skewed to polar residues; sequence RSNSLSRIHSTPQNESPTVNN. Residues 442-744 form the Protein kinase domain; it reads KSMGVVLGHG…IDQLLQSPWM (303 aa). ATP contacts are provided by residues 448–456 and Lys-485; that span reads LGHGAYGVV. Asp-595 (proton acceptor) is an active-site residue.

It belongs to the protein kinase superfamily. CAMK Ser/Thr protein kinase family. NPR/HAL subfamily. HAL5 sub-subfamily.

It catalyses the reaction L-seryl-[protein] + ATP = O-phospho-L-seryl-[protein] + ADP + H(+). The catalysed reaction is L-threonyl-[protein] + ATP = O-phospho-L-threonyl-[protein] + ADP + H(+). The polypeptide is Probable serine/threonine-protein kinase HAL5-like (Vanderwaltozyma polyspora (strain ATCC 22028 / DSM 70294 / BCRC 21397 / CBS 2163 / NBRC 10782 / NRRL Y-8283 / UCD 57-17) (Kluyveromyces polysporus)).